A 238-amino-acid polypeptide reads, in one-letter code: Pyridoxine 5'-phosphate synthase (238 aa).

Asn6 is a 3-amino-2-oxopropyl phosphate binding site. 8–9 is a 1-deoxy-D-xylulose 5-phosphate binding site; that stretch reads DH. Arg17 contributes to the 3-amino-2-oxopropyl phosphate binding site. The Proton acceptor role is filled by His42. 1-deoxy-D-xylulose 5-phosphate contacts are provided by Arg44 and His49. Glu69 functions as the Proton acceptor in the catalytic mechanism. Thr99 is a binding site for 1-deoxy-D-xylulose 5-phosphate. His186 (proton donor) is an active-site residue. 3-amino-2-oxopropyl phosphate-binding positions include Gly187 and 208–209; that span reads GH.

The protein belongs to the PNP synthase family. Homooctamer; tetramer of dimers.

Its subcellular location is the cytoplasm. It catalyses the reaction 3-amino-2-oxopropyl phosphate + 1-deoxy-D-xylulose 5-phosphate = pyridoxine 5'-phosphate + phosphate + 2 H2O + H(+). The protein operates within cofactor biosynthesis; pyridoxine 5'-phosphate biosynthesis; pyridoxine 5'-phosphate from D-erythrose 4-phosphate: step 5/5. Its function is as follows. Catalyzes the complicated ring closure reaction between the two acyclic compounds 1-deoxy-D-xylulose-5-phosphate (DXP) and 3-amino-2-oxopropyl phosphate (1-amino-acetone-3-phosphate or AAP) to form pyridoxine 5'-phosphate (PNP) and inorganic phosphate. The protein is Pyridoxine 5'-phosphate synthase of Anaplasma marginale (strain St. Maries).